A 275-amino-acid polypeptide reads, in one-letter code: Large ribosomal subunit protein uL2 (275 aa).

Residues 224–251 (VMNPVDHPHGGGEGRSPIGRKAPVTPWG) are disordered.

Belongs to the universal ribosomal protein uL2 family. As to quaternary structure, part of the 50S ribosomal subunit. Forms a bridge to the 30S subunit in the 70S ribosome.

Its function is as follows. One of the primary rRNA binding proteins. Required for association of the 30S and 50S subunits to form the 70S ribosome, for tRNA binding and peptide bond formation. It has been suggested to have peptidyltransferase activity; this is somewhat controversial. Makes several contacts with the 16S rRNA in the 70S ribosome. In Heliobacterium modesticaldum (strain ATCC 51547 / Ice1), this protein is Large ribosomal subunit protein uL2.